Consider the following 65-residue polypeptide: MPKIKTVRGAAKRFKKTASGGFKRKQSHLRHILTKKTTKRKRHLRHKSMVAKADNVLVVACLPYA.

The segment at 1–26 (MPKIKTVRGAAKRFKKTASGGFKRKQ) is disordered. Positions 10 to 26 (AAKRFKKTASGGFKRKQ) are enriched in basic residues.

It belongs to the bacterial ribosomal protein bL35 family.

This chain is Large ribosomal subunit protein bL35, found in Actinobacillus succinogenes (strain ATCC 55618 / DSM 22257 / CCUG 43843 / 130Z).